A 261-amino-acid polypeptide reads, in one-letter code: Thiazole synthase (261 aa).

Lys95 acts as the Schiff-base intermediate with DXP in catalysis. Residues Gly156, 182-183 (AG), and 204-205 (NT) each bind 1-deoxy-D-xylulose 5-phosphate.

The protein belongs to the ThiG family. As to quaternary structure, homotetramer. Forms heterodimers with either ThiH or ThiS.

The protein resides in the cytoplasm. It carries out the reaction [ThiS sulfur-carrier protein]-C-terminal-Gly-aminoethanethioate + 2-iminoacetate + 1-deoxy-D-xylulose 5-phosphate = [ThiS sulfur-carrier protein]-C-terminal Gly-Gly + 2-[(2R,5Z)-2-carboxy-4-methylthiazol-5(2H)-ylidene]ethyl phosphate + 2 H2O + H(+). The protein operates within cofactor biosynthesis; thiamine diphosphate biosynthesis. Its function is as follows. Catalyzes the rearrangement of 1-deoxy-D-xylulose 5-phosphate (DXP) to produce the thiazole phosphate moiety of thiamine. Sulfur is provided by the thiocarboxylate moiety of the carrier protein ThiS. In vitro, sulfur can be provided by H(2)S. This Pectobacterium carotovorum subsp. carotovorum (strain PC1) protein is Thiazole synthase.